Here is a 418-residue protein sequence, read N- to C-terminus: Histidine--tRNA ligase (418 aa).

This sequence belongs to the class-II aminoacyl-tRNA synthetase family.

It is found in the cytoplasm. It catalyses the reaction tRNA(His) + L-histidine + ATP = L-histidyl-tRNA(His) + AMP + diphosphate + H(+). This is Histidine--tRNA ligase from Methanococcus vannielii (strain ATCC 35089 / DSM 1224 / JCM 13029 / OCM 148 / SB).